The primary structure comprises 614 residues: Chaperone protein HtpG (614 aa).

Residues 1 to 324 (MSQIETKEFQ…SEELPLNISR (324 aa)) are a; substrate-binding. A b region spans residues 325 to 537 (ETMQDSALIA…SHYGTHSMQR (213 aa)). The interval 538-614 (MMQLMNRDLQ…LNEILEKALR (77 aa)) is c.

The protein belongs to the heat shock protein 90 family. As to quaternary structure, homodimer.

It localises to the cytoplasm. In terms of biological role, molecular chaperone. Has ATPase activity. The chain is Chaperone protein HtpG from Desulfitobacterium hafniense (strain Y51).